The following is a 364-amino-acid chain: Ferrochelatase (364 aa).

His-213 and Glu-294 together coordinate Fe cation.

Belongs to the ferrochelatase family.

It localises to the cytoplasm. It carries out the reaction heme b + 2 H(+) = protoporphyrin IX + Fe(2+). The protein operates within porphyrin-containing compound metabolism; protoheme biosynthesis; protoheme from protoporphyrin-IX: step 1/1. Its function is as follows. Catalyzes the ferrous insertion into protoporphyrin IX. This is Ferrochelatase from Chromobacterium violaceum (strain ATCC 12472 / DSM 30191 / JCM 1249 / CCUG 213 / NBRC 12614 / NCIMB 9131 / NCTC 9757 / MK).